A 475-amino-acid chain; its full sequence is Aspartyl/glutamyl-tRNA(Asn/Gln) amidotransferase subunit B (475 aa).

The protein belongs to the GatB/GatE family. GatB subfamily. In terms of assembly, heterotrimer of A, B and C subunits.

It carries out the reaction L-glutamyl-tRNA(Gln) + L-glutamine + ATP + H2O = L-glutaminyl-tRNA(Gln) + L-glutamate + ADP + phosphate + H(+). The enzyme catalyses L-aspartyl-tRNA(Asn) + L-glutamine + ATP + H2O = L-asparaginyl-tRNA(Asn) + L-glutamate + ADP + phosphate + 2 H(+). In terms of biological role, allows the formation of correctly charged Asn-tRNA(Asn) or Gln-tRNA(Gln) through the transamidation of misacylated Asp-tRNA(Asn) or Glu-tRNA(Gln) in organisms which lack either or both of asparaginyl-tRNA or glutaminyl-tRNA synthetases. The reaction takes place in the presence of glutamine and ATP through an activated phospho-Asp-tRNA(Asn) or phospho-Glu-tRNA(Gln). The chain is Aspartyl/glutamyl-tRNA(Asn/Gln) amidotransferase subunit B from Pediococcus pentosaceus (strain ATCC 25745 / CCUG 21536 / LMG 10740 / 183-1w).